The following is a 348-amino-acid chain: Adenosine deaminase (348 aa).

Zn(2+) contacts are provided by H16 and H18. Residues H18, D20, and G174 each contribute to the substrate site. H201 contacts Zn(2+). E204 (proton donor) is an active-site residue. D282 contributes to the Zn(2+) binding site.

This sequence belongs to the metallo-dependent hydrolases superfamily. Adenosine and AMP deaminases family. Adenosine deaminase subfamily. It depends on Zn(2+) as a cofactor.

It catalyses the reaction adenosine + H2O + H(+) = inosine + NH4(+). It carries out the reaction 2'-deoxyadenosine + H2O + H(+) = 2'-deoxyinosine + NH4(+). In terms of biological role, catalyzes the hydrolytic deamination of adenosine and 2-deoxyadenosine. This is Adenosine deaminase from Clostridium kluyveri (strain ATCC 8527 / DSM 555 / NBRC 12016 / NCIMB 10680 / K1).